The sequence spans 438 residues: Serine hydroxymethyltransferase 1 (438 aa).

Residues leucine 130 and 134-136 (GHL) contribute to the (6S)-5,6,7,8-tetrahydrofolate site. N6-(pyridoxal phosphate)lysine is present on lysine 239.

The protein belongs to the SHMT family. In terms of assembly, homodimer. Pyridoxal 5'-phosphate serves as cofactor.

It localises to the cytoplasm. It carries out the reaction (6R)-5,10-methylene-5,6,7,8-tetrahydrofolate + glycine + H2O = (6S)-5,6,7,8-tetrahydrofolate + L-serine. Its pathway is one-carbon metabolism; tetrahydrofolate interconversion. The protein operates within amino-acid biosynthesis; glycine biosynthesis; glycine from L-serine: step 1/1. Catalyzes the reversible interconversion of serine and glycine with tetrahydrofolate (THF) serving as the one-carbon carrier. This reaction serves as the major source of one-carbon groups required for the biosynthesis of purines, thymidylate, methionine, and other important biomolecules. Also exhibits THF-independent aldolase activity toward beta-hydroxyamino acids, producing glycine and aldehydes, via a retro-aldol mechanism. Thus, is able to catalyze the cleavage of L-allo-threonine. The sequence is that of Serine hydroxymethyltransferase 1 from Mycobacterium tuberculosis (strain ATCC 25618 / H37Rv).